Consider the following 254-residue polypeptide: Imidazole glycerol phosphate synthase subunit HisF (254 aa).

Residues aspartate 13 and aspartate 132 contribute to the active site.

Belongs to the HisA/HisF family. Heterodimer of HisH and HisF.

The protein resides in the cytoplasm. It carries out the reaction 5-[(5-phospho-1-deoxy-D-ribulos-1-ylimino)methylamino]-1-(5-phospho-beta-D-ribosyl)imidazole-4-carboxamide + L-glutamine = D-erythro-1-(imidazol-4-yl)glycerol 3-phosphate + 5-amino-1-(5-phospho-beta-D-ribosyl)imidazole-4-carboxamide + L-glutamate + H(+). It participates in amino-acid biosynthesis; L-histidine biosynthesis; L-histidine from 5-phospho-alpha-D-ribose 1-diphosphate: step 5/9. In terms of biological role, IGPS catalyzes the conversion of PRFAR and glutamine to IGP, AICAR and glutamate. The HisF subunit catalyzes the cyclization activity that produces IGP and AICAR from PRFAR using the ammonia provided by the HisH subunit. This is Imidazole glycerol phosphate synthase subunit HisF from Wolinella succinogenes (strain ATCC 29543 / DSM 1740 / CCUG 13145 / JCM 31913 / LMG 7466 / NCTC 11488 / FDC 602W) (Vibrio succinogenes).